Reading from the N-terminus, the 165-residue chain is Keratin-associated protein 5-7 (165 aa).

Repeat copies occupy residues 35–38 (CCVP), 41–44 (CCKP), 47–50 (CCVP), 116–119 (CCKP), 126–129 (CCKP), 145–148 (CCNP), and 155–158 (CCVP). The 7 X 4 AA repeats of C-C-X-P stretch occupies residues 35-158 (CCVPVCCCKP…CCSQSSCCVP (124 aa)).

It belongs to the KRTAP type 5 family. Interacts with hair keratins. Expressed in hair root but not in skin.

In terms of biological role, in the hair cortex, hair keratin intermediate filaments are embedded in an interfilamentous matrix, consisting of hair keratin-associated protein (KRTAP), which are essential for the formation of a rigid and resistant hair shaft through their extensive disulfide bond cross-linking with abundant cysteine residues of hair keratins. The matrix proteins include the high-sulfur and high-glycine-tyrosine keratins. This is Keratin-associated protein 5-7 (KRTAP5-7) from Homo sapiens (Human).